A 371-amino-acid chain; its full sequence is Protein OSB2, chloroplastic (371 aa).

Residues 1–20 (MSLISKSLARIECSPFFYPR) constitute a chloroplast transit peptide. Positions 45–64 (GKTGNGERKQRAKAPAKTPE) are disordered. The SSB domain maps to 97 to 195 (VANWVNLIGF…VLVQNLNFIQ (99 aa)). PDF region stretches follow at residues 237-289 (WNHL…PKLE) and 312-360 (WKDL…PKLP).

Expressed in the floral abscission zone.

The protein localises to the plastid. It localises to the chloroplast. Binds preferentially single-stranded DNA. Does not bind to RNA. The protein is Protein OSB2, chloroplastic (OSB2) of Arabidopsis thaliana (Mouse-ear cress).